A 170-amino-acid polypeptide reads, in one-letter code: Keratin-associated protein 9-2 (170 aa).

A run of 17 repeats spans residues 8-12, 13-17, 18-22, 37-41, 42-46, 51-55, 61-65, 66-70, 75-79, 80-84, 85-89, 90-94, 95-99, 140-144, 145-149, 150-154, and 164-168. The segment at 8-168 is 17 X 5 AA repeats of C-C-[RQVSGE]-[SPTQ]-[TASP]; that stretch reads CCQPTCCRTT…TCVSSCCQPS (161 aa).

The protein belongs to the KRTAP type 9 family. Interacts with hair keratins.

In the hair cortex, hair keratin intermediate filaments are embedded in an interfilamentous matrix, consisting of hair keratin-associated proteins (KRTAP), which are essential for the formation of a rigid and resistant hair shaft through their extensive disulfide bond cross-linking with abundant cysteine residues of hair keratins. The matrix proteins include the high-sulfur and high-glycine-tyrosine keratins. The protein is Keratin-associated protein 9-2 (KRTAP9-2) of Pan troglodytes (Chimpanzee).